The following is a 158-amino-acid chain: SsrA-binding protein (158 aa).

The span at 133–147 (KRQALRERQDNREAQ) shows a compositional bias: basic and acidic residues. The segment at 133–158 (KRQALRERQDNREAQRAMASRKHLGE) is disordered.

This sequence belongs to the SmpB family.

It localises to the cytoplasm. Required for rescue of stalled ribosomes mediated by trans-translation. Binds to transfer-messenger RNA (tmRNA), required for stable association of tmRNA with ribosomes. tmRNA and SmpB together mimic tRNA shape, replacing the anticodon stem-loop with SmpB. tmRNA is encoded by the ssrA gene; the 2 termini fold to resemble tRNA(Ala) and it encodes a 'tag peptide', a short internal open reading frame. During trans-translation Ala-aminoacylated tmRNA acts like a tRNA, entering the A-site of stalled ribosomes, displacing the stalled mRNA. The ribosome then switches to translate the ORF on the tmRNA; the nascent peptide is terminated with the 'tag peptide' encoded by the tmRNA and targeted for degradation. The ribosome is freed to recommence translation, which seems to be the essential function of trans-translation. This chain is SsrA-binding protein, found in Leifsonia xyli subsp. xyli (strain CTCB07).